The chain runs to 585 residues: Testis-specific serine kinase substrate (585 aa).

The segment covering 91-108 has biased composition (low complexity); that stretch reads EPDSSGTDSTTEDSGPLA. Residues 91 to 126 form a disordered region; that stretch reads EPDSSGTDSTTEDSGPLALPGPPASPTTPWAPEDPD. 3 positions are modified to phosphoserine: Ser-224, Ser-281, and Ser-309. Disordered stretches follow at residues 262 to 309 and 559 to 585; these read SRHG…PSLS and LEGSTGAMGGGSTGGAPPKRGGPGSEQ.

Post-translationally, phosphorylated on serine residue(s) by STK22A/TSSK1 and STK22B/TSSK2.

It is found in the cytoplasm. The protein localises to the cytoskeleton. The protein resides in the microtubule organizing center. It localises to the centrosome. Its subcellular location is the centriole. May play a role in testicular physiology, most probably in the process of spermatogenesis or spermatid development. The chain is Testis-specific serine kinase substrate (Tsks) from Rattus norvegicus (Rat).